The sequence spans 787 residues: Endonuclease MutS2 (787 aa).

Position 331 to 338 (331 to 338) interacts with ATP; sequence GPNTGGKT. Residues 711–786 enclose the Smr domain; the sequence is IDVRGKTSDD…EQGVTVVELK (76 aa).

The protein belongs to the DNA mismatch repair MutS family. MutS2 subfamily. Homodimer. Binds to stalled ribosomes, contacting rRNA.

Its function is as follows. Endonuclease that is involved in the suppression of homologous recombination and thus may have a key role in the control of bacterial genetic diversity. Acts as a ribosome collision sensor, splitting the ribosome into its 2 subunits. Detects stalled/collided 70S ribosomes which it binds and splits by an ATP-hydrolysis driven conformational change. Acts upstream of the ribosome quality control system (RQC), a ribosome-associated complex that mediates the extraction of incompletely synthesized nascent chains from stalled ribosomes and their subsequent degradation. Probably generates substrates for RQC. This chain is Endonuclease MutS2, found in Caldicellulosiruptor bescii (strain ATCC BAA-1888 / DSM 6725 / KCTC 15123 / Z-1320) (Anaerocellum thermophilum).